A 253-amino-acid polypeptide reads, in one-letter code: Claudin domain-containing protein 1 (253 aa).

A helical transmembrane segment spans residues 5–25 (FATAFVIACVLSLISTIYMAA). Residues asparagine 42 and asparagine 72 are each glycosylated (N-linked (GlcNAc...) asparagine). The next 3 membrane-spanning stretches (helical) occupy residues 141 to 161 (FLLPFVSLGLMCFGALIGLCA), 175 to 195 (ILHLLAGLCTLGSVSCYVAGI), and 216 to 236 (FCLACVSAPLQFMASALFIWA).

This sequence belongs to the PMP-22/EMP/MP20 family.

It is found in the cell junction. It localises to the tight junction. The protein resides in the cell membrane. In terms of biological role, plays a role in negatively regulating the permeability of cells to small molecules. In Macaca fascicularis (Crab-eating macaque), this protein is Claudin domain-containing protein 1 (CLDND1).